The chain runs to 862 residues: Eukaryotic translation initiation factor 3 subunit C (862 aa).

Residues 1–10 (MSRFFYGGGS) are compositionally biased toward gly residues. The interval 1–81 (MSRFFYGGGS…DEEKTTVVKS (81 aa)) is disordered. Acidic residues predominate over residues 16 to 52 (SSDEEELYERDEEEQSEEEESSEEEETSEEGSDDEEG). Residues 601–775 (FHMHINLELL…GAIVFRKGVE (175 aa)) form the PCI domain. A disordered region spans residues 814-862 (RDQGAGARGGRGGGRGGHARGGARFPGQQGRRPGGQQFGGGALGGAIKA). Residues 819–833 (GARGGRGGGRGGHAR) show a composition bias toward gly residues. Low complexity predominate over residues 835–844 (GARFPGQQGR). Positions 845-862 (RPGGQQFGGGALGGAIKA) are enriched in gly residues.

This sequence belongs to the eIF-3 subunit C family. In terms of assembly, component of the eukaryotic translation initiation factor 3 (eIF-3) complex.

It localises to the cytoplasm. Its function is as follows. Component of the eukaryotic translation initiation factor 3 (eIF-3) complex, which is involved in protein synthesis of a specialized repertoire of mRNAs and, together with other initiation factors, stimulates binding of mRNA and methionyl-tRNAi to the 40S ribosome. The eIF-3 complex specifically targets and initiates translation of a subset of mRNAs involved in cell proliferation. This is Eukaryotic translation initiation factor 3 subunit C (nip1) from Aspergillus clavatus (strain ATCC 1007 / CBS 513.65 / DSM 816 / NCTC 3887 / NRRL 1 / QM 1276 / 107).